The chain runs to 448 residues: Cyclic dof factor 3 (448 aa).

The interval 26–108 (AVTVEDDEED…DGKTLKKPTK (83 aa)) is disordered. Acidic residues predominate over residues 29-39 (VEDDEEDDWSG). Over residues 40 to 54 (GDDKSPEKVTPELSD) the composition is skewed to basic and acidic residues. Over residues 55–69 (KNNNNCNDNSFNNSK) the composition is skewed to low complexity. Residues 80–99 (STDQIESSDTPEDNQQTTPD) are compositionally biased toward polar residues. The Dof-type zinc finger occupies 110-164 (LPCPRCKSMETKFCYYNNYNINQPRHFCKACQRYWTAGGTMRNVPVGAGRRKNKS). Cysteine 112, cysteine 115, cysteine 137, and cysteine 140 together coordinate Zn(2+). 2 disordered regions span residues 243 to 269 (NGDD…AQSG) and 332 to 370 (SSSP…KQKA). Composition is skewed to polar residues over residues 246 to 259 (DCSS…SNNH) and 332 to 347 (SSSP…NSPT). Positions 351–368 (HPRDEGSSKKDNETERKQ) are enriched in basic and acidic residues.

Interacts with ADO2 (via kelch repeats) and ADO3 (via kelch repeats). In terms of tissue distribution, expressed in the vasculature of cotyledons and hypocotyls, leaves and roots.

Its subcellular location is the nucleus. In terms of biological role, transcription factor that binds specifically to a 5'-AA[AG]G-3' consensus core sequence. Regulates a photoperiodic flowering response. Transcriptional repressor of 'CONSTANS' expression. The sequence is that of Cyclic dof factor 3 (CDF3) from Arabidopsis thaliana (Mouse-ear cress).